Reading from the N-terminus, the 258-residue chain is Probable succinate transporter subunit YjjP (258 aa).

Helical transmembrane passes span 116 to 137 (YPRWLLVLMVGLSCACFCKLNN), 143 to 160 (AVVTFFASTVAMYIRQLL), 171 to 191 (FCITAFVATTISGLMLRLPAF), 197 to 217 (IAMAASVLLLVPGFPLINAVA), and 231 to 251 (WAIASLLTLATCIGVVMAMTM).

It belongs to the ThrE exporter (TC 2.A.79) family. The transporter is composed of YjjB and YjjP.

The protein localises to the cell inner membrane. Functionally, involved in succinate export with YjjB. Both proteins are required for export. Participates in succinate export, but also in the export of other dicarboxylates, such as fumarate and malate. Contributes to succinate production under both aerobic and anaerobic conditions, and increases fumarate and malate production during anaerobic succinate production. The polypeptide is Probable succinate transporter subunit YjjP (Klebsiella aerogenes (strain ATCC 13048 / DSM 30053 / CCUG 1429 / JCM 1235 / KCTC 2190 / NBRC 13534 / NCIMB 10102 / NCTC 10006 / CDC 819-56) (Enterobacter aerogenes)).